Reading from the N-terminus, the 180-residue chain is Inorganic pyrophosphatase (180 aa).

Residues lysine 30, arginine 44, and tyrosine 56 each coordinate substrate. Residues aspartate 66, aspartate 71, and aspartate 103 each coordinate Mg(2+). Residue tyrosine 142 participates in substrate binding.

Belongs to the PPase family. As to quaternary structure, homohexamer. Mg(2+) serves as cofactor.

The protein localises to the cytoplasm. The enzyme catalyses diphosphate + H2O = 2 phosphate + H(+). In terms of biological role, catalyzes the hydrolysis of inorganic pyrophosphate (PPi) forming two phosphate ions. The chain is Inorganic pyrophosphatase from Buchnera aphidicola subsp. Schizaphis graminum (strain Sg).